A 447-amino-acid chain; its full sequence is GTPase Der (447 aa).

EngA-type G domains are found at residues 2 to 166 (YRVA…PEYE) and 183 to 358 (IKVA…NQSW). GTP contacts are provided by residues 8-15 (GRPNVGKS), 55-59 (DTGGY), 118-121 (NKID), 189-196 (GKPNAGKS), 236-240 (DTAGL), and 301-304 (NKID). The KH-like domain occupies 359-443 (KRVGTGQLNR…PIKLLLRGKE (85 aa)).

The protein belongs to the TRAFAC class TrmE-Era-EngA-EngB-Septin-like GTPase superfamily. EngA (Der) GTPase family. As to quaternary structure, associates with the 50S ribosomal subunit.

In terms of biological role, GTPase that plays an essential role in the late steps of ribosome biogenesis. This is GTPase Der from Persephonella marina (strain DSM 14350 / EX-H1).